A 527-amino-acid chain; its full sequence is Bifunctional purine biosynthesis protein PurH (527 aa).

Residues 1–149 (MASDFLPVRR…KNFARVAVAT (149 aa)) enclose the MGS-like domain.

The protein belongs to the PurH family.

The enzyme catalyses (6R)-10-formyltetrahydrofolate + 5-amino-1-(5-phospho-beta-D-ribosyl)imidazole-4-carboxamide = 5-formamido-1-(5-phospho-D-ribosyl)imidazole-4-carboxamide + (6S)-5,6,7,8-tetrahydrofolate. It catalyses the reaction IMP + H2O = 5-formamido-1-(5-phospho-D-ribosyl)imidazole-4-carboxamide. It participates in purine metabolism; IMP biosynthesis via de novo pathway; 5-formamido-1-(5-phospho-D-ribosyl)imidazole-4-carboxamide from 5-amino-1-(5-phospho-D-ribosyl)imidazole-4-carboxamide (10-formyl THF route): step 1/1. Its pathway is purine metabolism; IMP biosynthesis via de novo pathway; IMP from 5-formamido-1-(5-phospho-D-ribosyl)imidazole-4-carboxamide: step 1/1. This is Bifunctional purine biosynthesis protein PurH from Xanthomonas oryzae pv. oryzae (strain MAFF 311018).